Consider the following 545-residue polypeptide: Membrane protein insertase YidC (545 aa).

The next 4 helical transmembrane spans lie at 350–370 (IIGN…AVLY), 424–444 (LPML…FASV), 461–481 (ADPY…QTYL), and 498–518 (PLVF…YWVV).

This sequence belongs to the OXA1/ALB3/YidC family. Type 1 subfamily. In terms of assembly, interacts with the Sec translocase complex via SecD. Specifically interacts with transmembrane segments of nascent integral membrane proteins during membrane integration.

Its subcellular location is the cell inner membrane. In terms of biological role, required for the insertion and/or proper folding and/or complex formation of integral membrane proteins into the membrane. Involved in integration of membrane proteins that insert both dependently and independently of the Sec translocase complex, as well as at least some lipoproteins. Aids folding of multispanning membrane proteins. The protein is Membrane protein insertase YidC of Neisseria meningitidis serogroup C (strain 053442).